The following is a 287-amino-acid chain: Immunoglobulin alpha Fc receptor (287 aa).

A signal peptide spans 1-21 (MDPKQTTLLCLVLCLGQRIQA). The Extracellular portion of the chain corresponds to 22-227 (QEGDFPMPFI…SIHQDYTTQN (206 aa)). Ig-like C2-type domains lie at 42–107 (DGSV…IGHY) and 139–200 (GENI…YNRS). C49 and C100 are joined by a disulfide. 5 N-linked (GlcNAc...) asparagine glycosylation sites follow: N65, N79, N141, N177, and N186. The cysteines at positions 146 and 193 are disulfide-linked. Residues 228–246 (LIRMAVAGLVLVALLAILV) traverse the membrane as a helical segment. The Cytoplasmic segment spans residues 247-287 (ENWHSHTALNKEASADVAEPSWSQQMCQPGLTFARTPSVCK).

In terms of assembly, associates with the Fc epsilon RI gamma 2 receptor inducing tyrosine phosphorylation of gamma 2. As to quaternary structure, (Microbial infection) Interacts with Staphylococcus aureus protein SSL11. In terms of tissue distribution, isoform A.1, isoform A.2 and isoform A.3 are differentially expressed between blood and mucosal myeloid cells. Isoform A.1, isoform A.2 and isoform A.3 are expressed in monocytes. Isoform A.1 and isoform A.2 are expressed in alveolar macrophages; however only one isoform is expressed at alveolar macrophages surfaces.

Its subcellular location is the cell membrane. It is found in the secreted. In terms of biological role, binds to the Fc region of immunoglobulins alpha. Mediates several functions including cytokine production. In Homo sapiens (Human), this protein is Immunoglobulin alpha Fc receptor (FCAR).